Reading from the N-terminus, the 450-residue chain is Molybdate-anion transporter (450 aa).

12 consecutive transmembrane segments (helical) span residues 1–21 (MLVT…GLEL), 38–58 (FLQF…ADWL), 79–99 (ILYV…SSLV), 128–148 (FVLL…FSAF), 167–187 (IPAT…AAGV), 191–211 (AVAS…IPLL), 249–269 (VLLL…FVFL), 278–298 (GAPL…GSSL), 311–331 (PMHL…MLTF), 344–364 (FIAF…MSFL), 376–396 (GVLN…LLVL), and 409–429 (FSIC…LFTV).

Belongs to the major facilitator superfamily.

The protein localises to the cell membrane. Mediates high-affinity intracellular uptake of the rare oligo-element molybdenum. The polypeptide is Molybdate-anion transporter (Mfsd5) (Mus musculus (Mouse)).